The sequence spans 443 residues: Methyl-coenzyme M reductase subunit beta (443 aa).

A coenzyme M-binding site is contributed by Y367. G369 serves as a coordination point for coenzyme B.

It belongs to the methyl-coenzyme M reductase beta subunit family. MCR is a hexamer of two alpha, two beta, and two gamma chains, forming a dimer of heterotrimers. Requires coenzyme F430 as cofactor.

It localises to the cytoplasm. The enzyme catalyses coenzyme B + methyl-coenzyme M = methane + coenzyme M-coenzyme B heterodisulfide. The protein operates within one-carbon metabolism; methyl-coenzyme M reduction; methane from methyl-coenzyme M: step 1/1. Its function is as follows. Component of the methyl-coenzyme M reductase (MCR) I that catalyzes the reductive cleavage of methyl-coenzyme M (CoM-S-CH3 or 2-(methylthio)ethanesulfonate) using coenzyme B (CoB or 7-mercaptoheptanoylthreonine phosphate) as reductant which results in the production of methane and the mixed heterodisulfide of CoB and CoM (CoM-S-S-CoB). This is the final step in methanogenesis. The sequence is that of Methyl-coenzyme M reductase subunit beta (mcrB) from Methanococcus vannielii.